We begin with the raw amino-acid sequence, 350 residues long: Guanine nucleotide-binding protein G(t) subunit alpha-1 (350 aa).

The tract at residues 1 to 21 is disordered; the sequence is MGAGASAEEKHSRELEKKLKE. Glycine 2 carries the N-myristoyl glycine lipid modification. The span at 7-21 shows a compositional bias: basic and acidic residues; the sequence is AEEKHSRELEKKLKE. In terms of domain architecture, G-alpha spans 28-350; the sequence is RTVKLLLLGA…KENLKDCGLF (323 aa). The interval 31 to 44 is G1 motif; sequence KLLLLGAGESGKST. Residue 36–43 coordinates GTP; sequence GAGESGKS. Mg(2+) is bound at residue serine 43. Tyrosine 142 carries the post-translational modification Phosphotyrosine. GTP-binding positions include aspartate 146, 171-177, glycine 199, 265-268, and alanine 322; these read LRSRVKT and NKKD. Residues 169-177 form a G2 motif region; it reads DVLRSRVKT. Threonine 177 provides a ligand contact to Mg(2+). Positions 192–201 are G3 motif; sequence FRMFDVGGQR. The G4 motif stretch occupies residues 261–268; it reads VLFLNKKD. The interval 320 to 325 is G5 motif; it reads TCATDT. The interval 340–350 is interaction with RHO; sequence IKENLKDCGLF.

The protein belongs to the G-alpha family. G(i/o/t/z) subfamily. In terms of assembly, heterotrimeric G proteins are composed of 3 subunits alpha, beta and gamma. The alpha chain contains the guanine nucleotide binding site. Interacts with RHO. Interacts with RGS9 and PDE6G. Interacts (when myristoylated) with UNC119; interaction is required for localization in sensory neurons. As to expression, in the retina, expressed in the rod photoreceptors.

The protein resides in the cell projection. Its subcellular location is the cilium. It localises to the photoreceptor outer segment. The protein localises to the membrane. It is found in the photoreceptor inner segment. Functionally, functions as a signal transducer for the rod photoreceptor RHO. Required for normal RHO-mediated light perception by the retina. Guanine nucleotide-binding proteins (G proteins) function as transducers downstream of G protein-coupled receptors (GPCRs), such as the photoreceptor RHO. The alpha chain contains the guanine nucleotide binding site and alternates between an active, GTP-bound state and an inactive, GDP-bound state. Activated RHO promotes GDP release and GTP binding. Signaling is mediated via downstream effector proteins, such as cGMP-phosphodiesterase. The sequence is that of Guanine nucleotide-binding protein G(t) subunit alpha-1 (Gnat1) from Mus musculus (Mouse).